Here is a 139-residue protein sequence, read N- to C-terminus: Putative pre-16S rRNA nuclease (139 aa).

This sequence belongs to the YqgF nuclease family.

Its subcellular location is the cytoplasm. Functionally, could be a nuclease involved in processing of the 5'-end of pre-16S rRNA. In Streptococcus equi subsp. zooepidemicus (strain H70), this protein is Putative pre-16S rRNA nuclease.